The following is a 485-amino-acid chain: Cobyric acid synthase (485 aa).

The GATase cobBQ-type domain maps to 248-435; it reads VLKVVVPVLP…LHGLFESPDA (188 aa). The active-site Nucleophile is cysteine 329. Histidine 427 is a catalytic residue.

This sequence belongs to the CobB/CobQ family. CobQ subfamily.

The protein operates within cofactor biosynthesis; adenosylcobalamin biosynthesis. Functionally, catalyzes amidations at positions B, D, E, and G on adenosylcobyrinic A,C-diamide. NH(2) groups are provided by glutamine, and one molecule of ATP is hydrogenolyzed for each amidation. This Stutzerimonas stutzeri (strain A1501) (Pseudomonas stutzeri) protein is Cobyric acid synthase.